The sequence spans 102 residues: NADH-quinone oxidoreductase subunit K 1 (102 aa).

3 helical membrane-spanning segments follow: residues 5–25 (LLHV…CVLV), 30–50 (IIMM…AFVG), and 62–82 (VFAL…LALV).

It belongs to the complex I subunit 4L family. In terms of assembly, NDH-1 is composed of 14 different subunits. Subunits NuoA, H, J, K, L, M, N constitute the membrane sector of the complex.

It is found in the cell inner membrane. The catalysed reaction is a quinone + NADH + 5 H(+)(in) = a quinol + NAD(+) + 4 H(+)(out). NDH-1 shuttles electrons from NADH, via FMN and iron-sulfur (Fe-S) centers, to quinones in the respiratory chain. The immediate electron acceptor for the enzyme in this species is believed to be ubiquinone. Couples the redox reaction to proton translocation (for every two electrons transferred, four hydrogen ions are translocated across the cytoplasmic membrane), and thus conserves the redox energy in a proton gradient. The polypeptide is NADH-quinone oxidoreductase subunit K 1 (Geotalea uraniireducens (strain Rf4) (Geobacter uraniireducens)).